A 611-amino-acid chain; its full sequence is U-box domain-containing protein 12 (611 aa).

The U-box domain occupies 227–301 (IIPDEFRCPI…SQWCEANGIE (75 aa)). ARM repeat units lie at residues 355–394 (VNNRICIAEAGAIPLLVNLLSSSDPRTQEHAVTALLNLSI), 396–435 (ENNKASIVDSHAIPKIVEVLKTGSMETRENAAATLFSLSV), 437–476 (DENKVTIGAAGAIPPLINLLCDGSPRGKKDAATAIFNLCI), and 478–517 (QGNKVRAVKAGIVIHLMNFLVDPTGGMIDEALSLLSILAG).

It catalyses the reaction S-ubiquitinyl-[E2 ubiquitin-conjugating enzyme]-L-cysteine + [acceptor protein]-L-lysine = [E2 ubiquitin-conjugating enzyme]-L-cysteine + N(6)-ubiquitinyl-[acceptor protein]-L-lysine.. Its pathway is protein modification; protein ubiquitination. Functionally, possesses E3 ubiquitin-protein ligase in vitro. This Oryza sativa subsp. japonica (Rice) protein is U-box domain-containing protein 12 (PUB12).